Reading from the N-terminus, the 67-residue chain is Arasin 2 (67 aa).

The first 25 residues, 1-25 (MERRTLLVVLLVCSCVVAAAAEASP), serve as a signal peptide directing secretion. The disordered stretch occupies residues 22–44 (EASPSRWPSPGRPRPFPGRPNPI). Residues 31–44 (PGRPRPFPGRPNPI) show a composition bias toward pro residues. Cystine bridges form between C50–C59 and C52–C57.

In terms of assembly, interacts with chitin through the N-terminal region (26-48). This interaction may be important, since chitin is a component of the fungal cell wall, as well as of the crab exoskeleton (permitting a possible action of arasin in wound healing in case of lesions). Disulfide bonds are important for activity especially against Gram-negative bacteria, since the linearization of the peptide causes a strong decrease of activity on these bacteria. As to expression, mainly expressed in hemocytes. No or very low expression in heart, gills, inestines, and epidermis.

Functionally, antimicrobial peptide that has a large activity spectrum with activity against Gram-positive, Gram-negative bacteria, as well as against fungi. Shows activity at micromolar concentrations. Displays minimal inhibitory concentration (MIC) values lower than minimal bactericidal concentrations (MBC). May have a dual mode of action depending on the peptide concentrations. At MIC concentrations, the peptide penetrates into the cytoplasm of target cells (tested on the Gram-negative E.coli). The two inner membrane proteins YgdD and SbmA may be required for this uptake. At concentrations higher than MIC, arasin may act by disrupting membranes. Does not show hemolytic activity. In Hyas araneus (Atlantic lyre crab), this protein is Arasin 2.